A 949-amino-acid polypeptide reads, in one-letter code: ATPase 1, plasma membrane-type (949 aa).

Residue serine 2 is modified to N-acetylserine. Residues serine 2–phenylalanine 61 are Cytoplasmic-facing. Residues leucine 62–isoleucine 81 form a helical membrane-spanning segment. The Extracellular portion of the chain corresponds to alanine 82–tryptophan 93. A helical transmembrane segment spans residues glutamine 94–glutamate 114. Residues asparagine 115–isoleucine 243 are Cytoplasmic-facing. Residues glycine 244 to proline 264 traverse the membrane as a helical segment. The Extracellular segment spans residues isoleucine 265 to glycine 273. A helical transmembrane segment spans residues isoleucine 274–threonine 291. Topologically, residues valine 292 to lysine 643 are cytoplasmic. Aspartate 329 serves as the catalytic 4-aspartylphosphate intermediate. 2 residues coordinate Mg(2+): aspartate 588 and aspartate 592. Residues asparagine 644 to leucine 665 traverse the membrane as a helical segment. Residues isoleucine 666–aspartate 670 lie on the Extracellular side of the membrane. A helical membrane pass occupies residues phenylalanine 671–aspartate 693. The Cytoplasmic segment spans residues arginine 694–isoleucine 709. The helical transmembrane segment at phenylalanine 710–alanine 730 threads the bilayer. Topologically, residues alanine 731–aspartate 751 are extracellular. The helical transmembrane segment at glutamate 752 to threonine 772 threads the bilayer. Over arginine 773–glycine 784 the chain is Cytoplasmic. A helical transmembrane segment spans residues alanine 785–alanine 805. The Extracellular segment spans residues aspartate 806–lysine 813. Residues glycine 814 to glutamine 834 form a helical membrane-spanning segment. The Cytoplasmic segment spans residues aspartate 835 to valine 949. Threonine 881 is subject to Phosphothreonine. Residues serine 899 and serine 931 each carry the phosphoserine modification. Positions tyrosine 947 to valine 949 are interaction with 14-3-3 proteins. Phosphothreonine is present on threonine 948.

This sequence belongs to the cation transport ATPase (P-type) (TC 3.A.3) family. Type IIIA subfamily. As to quaternary structure, binds to 14-3-3 proteins. The binding is induced by phosphorylation of Thr-948. Binding to 14-3-3 proteins activates the H(+)-ATPase. Interacts with PPI1; this interaction promotes ATPase activity. Interacts with PSY1R. Part of a functional complex containing PSKR1, BAK1, CNGC17, and AHA. Interacts with CNGC17 and PSKR1. Triggered by SAUR9 via the phosphorylation of the C-terminal autoinhibitory domain. Interacts with AHA2. Binds to CBC1 and CBC2. In terms of processing, phosphorylated, probably by PHOT1 and PHOT2, at C-terminal Thr-948 in guard cells in response to blue light to induce stomatal opening. Expressed in guard cells, mesophyll cells, leaves and roots.

The protein localises to the cell membrane. The catalysed reaction is ATP + H2O + H(+)(in) = ADP + phosphate + 2 H(+)(out). Its activity is regulated as follows. Phosphorylation on Thr residues is repressed by tyrphostin 9, sphingosine, GW5074 and BML-265. By contrast, the fungal phytotoxin fusicoccin (FC) promotes phosphorylation of Thr-948 independently to BHP, thus leading to large stomatal opening. In terms of biological role, the plasma membrane H(+) ATPase of plants and fungi generates a proton gradient that drives the active transport of nutrients by H(+)-symport. The resulting external acidification and/or internal alkinization may mediate growth responses. Forms a functional cation-translocating unit with CNGC17 that is activated by PSKR1/BAK1 and possibly other BAK1/RLK complexes. Promotes stomatal opening in response to blue light. This Arabidopsis thaliana (Mouse-ear cress) protein is ATPase 1, plasma membrane-type.